The sequence spans 300 residues: MKRARFVVLGSGAASPAPERALPAHYFEYEGVGALLDCGEGTQFQLMKAKISFSRIKVVFVSHLHGDHVLGLPGLLQTMAMASRRDELLVIGPKGLKDFLLSSFELTYFYPPYPIKVVEVLRDAEITYRNLKLKVFPVNHTVPAFGVSVETASKRKVRADVLEREGLPKRLWGRLQRGEDVVWEGRVFKYEDFTFEGERIKVVYSGDTAPCERLVEEAEGADLLVHEATFTKELKEEAHDRGHSTAEDAATAAARAGVKQLLMVHFSARYKDLRRHLEEARRVFPRSYAAEDLTKVVILK.

Residues His-63, His-65, Asp-67, His-68, His-140, Asp-207, and His-265 each coordinate Zn(2+). Asp-67 acts as the Proton acceptor in catalysis.

The protein belongs to the RNase Z family. In terms of assembly, homodimer. The cofactor is Zn(2+).

The enzyme catalyses Endonucleolytic cleavage of RNA, removing extra 3' nucleotides from tRNA precursor, generating 3' termini of tRNAs. A 3'-hydroxy group is left at the tRNA terminus and a 5'-phosphoryl group is left at the trailer molecule.. Zinc phosphodiesterase, which displays some tRNA 3'-processing endonuclease activity. Probably involved in tRNA maturation, by removing a 3'-trailer from precursor tRNA. The sequence is that of Ribonuclease Z from Ignicoccus hospitalis (strain KIN4/I / DSM 18386 / JCM 14125).